A 485-amino-acid polypeptide reads, in one-letter code: GTPase Der (485 aa).

EngA-type G domains are found at residues 3 to 167 (PTIA…PEPE) and 176 to 349 (PVFA…NAAM). GTP contacts are provided by residues 9 to 16 (GRPNVGKS), 56 to 60 (DTGGF), 119 to 122 (NKGE), 182 to 189 (GRPNVGKS), 229 to 233 (DTAGV), and 294 to 297 (NKWD). In terms of domain architecture, KH-like spans 350 to 434 (IKMPTPKITR…PLRIQYNVSE (85 aa)). A disordered region spans residues 435–485 (NPYENAEDKPKKKPLRRVSLSNRIEKREGRKEEKNRFKKKTKVSVKKQFSK). Basic and acidic residues predominate over residues 457-469 (RIEKREGRKEEKN). Residues 470–485 (RFKKKTKVSVKKQFSK) show a composition bias toward basic residues.

The protein belongs to the TRAFAC class TrmE-Era-EngA-EngB-Septin-like GTPase superfamily. EngA (Der) GTPase family. Associates with the 50S ribosomal subunit.

In terms of biological role, GTPase that plays an essential role in the late steps of ribosome biogenesis. The sequence is that of GTPase Der from Neisseria meningitidis serogroup B (strain ATCC BAA-335 / MC58).